The following is a 430-amino-acid chain: Sesquiterpene synthase Agr5 (430 aa).

A signal peptide spans 1–25 (MASSLLEPSLAAIALVILLASVSLS). N-linked (GlcNAc...) asparagine glycosylation is present at asparagine 113. Residues aspartate 176, asparagine 311, serine 315, and glutamate 319 each coordinate Mg(2+). The DDXXD motif motif lies at 176 to 180 (DEYTD). Positions 401 and 402 each coordinate (2E,6E)-farnesyl diphosphate.

Belongs to the terpene synthase family. Mg(2+) serves as cofactor.

It carries out the reaction (2E,6E)-farnesyl diphosphate = viridiflorene + diphosphate. Its function is as follows. Terpene cyclase that catalyzes the cyclization of farnesyl diphosphate (FPP) to viridiflorene and viridiflorol. The polypeptide is Sesquiterpene synthase Agr5 (Cyclocybe aegerita (Black poplar mushroom)).